The chain runs to 979 residues: METGSPGKRPVLPKRARLLVTAGMGMLALLLFGPRLVDIYVDWLWFGEVGFRSVWITVLLTRLAIVAAVALVVAGIVLAALLLAYRSRPFFVPDEPQRDPVAPLRSAVMRRPRLFGWGIAVTLGVVCGLIASFDWVKVQLFVHGGTFGIVDPEFGYDIGFFVFDLPFYRSVLNWLFVAVVLAFLASLLTHYLFGGLRLTTGRGMLTQAARVQLAVFAGAVVLLKAVAYWLDRYELLSSGRKEPTFTGAGYTDIHAELPAKLVLVAIAVLCAVSFFTAIFLRDLRIPAMAAALLVLSAILVGGLWPLLMEQFSVRPNAADVERPYIQRNIEATREAYRIGGDWVQYRSYPGIGTKQPRDVPVDVTTIAKVRLLDPHILSRTFTQQQQLKNFFSFAEILDIDRYRIDGELQDYIVGVREFSPKSLTGNQTDWINKHTVYTHGNGFVAAPANRVNAAARDAENISDSNSGYPIYAVSDIASLGSGRQVIPVEQPRVYYGEVIAQADPDYAIVGGAPGSAPREYDTDTSKYTYTGAGGVSIGNWFNRTVFATKVAQHKFLFSREIGSESKVLIHRDPKERVQRVAPWLTTDDNPYPVVVNGRIVWIVDAYTTLDTYPYAQRSSLEGPVTSPTGIVRQGKQVSYVRNSVKATVDAYDGTVTLFQFDRDDPVLRTWMRAFPGTVKSEDQIPDELRAHFRYPEDLFEVQRSLLAKYHVDEPREFFTTNAFWSVPSDPTNDANATQPPFYVLVGDQQSAQPSFRLASAMVGYNREFLSAYISAHSDPANYGKLTVLELPTDTLTQGPQQIQNSMISDTRVASERTLLERSNRIHYGNLLSLPIADGGVLYVEPLYTERISTSPSSSTFPQLSRVLVSVREPRTEGGVRVGYAPTLAESLDQVFGPGTGRVATXPGGDAASAPPPGAGGPAPPQGVPPPRTTQPPAAPPRGPDVPPATVAELRETLADLRAVLDRLEKAIDAAETPGG.

A run of 7 helical transmembrane segments spans residues 19–41, 63–85, 114–136, 174–196, 208–230, 261–280, and 285–307; these read LVTAGMGMLALLLFGPRLVDIYV, LAIVAAVALVVAGIVLAALLLAY, LFGWGIAVTLGVVCGLIASFDWV, WLFVAVVLAFLASLLTHYLFGGL, AARVQLAVFAGAVVLLKAVAYWL, LVLVAIAVLCAVSFFTAIFL, and IPAMAAALLVLSAILVGGLWPLL. Positions 894 to 948 are disordered; the sequence is VFGPGTGRVATXPGGDAASAPPPGAGGPAPPQGVPPPRTTQPPAAPPRGPDVPPA. Pro residues predominate over residues 913–946; sequence APPPGAGGPAPPQGVPPPRTTQPPAAPPRGPDVP.

Belongs to the UPF0182 family.

It is found in the cell membrane. This is UPF0182 protein MT0070 from Mycobacterium tuberculosis (strain CDC 1551 / Oshkosh).